The sequence spans 1132 residues: MIQESSPDALAAAAAIGNALSYNGRTVDKSKIPQYNQSFTSRTTSIAGINRYTMLSNSRTNSRMLLMNGNVRQYSKRTSSLPNQGHKNTSNNSAGRRQHRAHEDAETTFREFGGKQSSKVLNISSSTGQNSKSRTTSLGNSGSTIRTIKKYIPGPRGLMAVEVPVEVEPPRYSLSNRSNQRGGRAYSLPTRNNKTSLMHRNKTTKKAGSQEKKSESGGKSKNDYHGKVLSKMHTTSLKQRHNNVPLIPTTMNEETEQELQEDLHDPLEFKPMIISDDENSFIEPSVLDRSIPKKDKSGLSGREKKEEIETLLKEVHSLEEKISNIEIAKLNEEEREQSLILELRKVKLDEERRMELLKRELNIVKENADLEAQELKLIESKRKQHFHKGQEVASEVKSITIRQPTLSEPKPAYVPPEDVEKEPSTLSNQTQNIENAENIDSVDAEGNLVDPILLGSLNNSNFHMNSDNEVRCIADSNSLTGSELSDYNYIEGSATDLRATAKTSVESEIGGNQVGLKIPQDDDSEKQEERTKGKKSGLVDTNCFLVQKEDQEEALSDNEPESSEKFPSTSGIENVKLEDETGSVMDKNNGPNNDKDDDDDKDNDNDDDDDKDDDVNDDDKDENVDDDENVDDDDDDDDDDDDEYHDSYDVIMRDPVQIEQDISDVPSLKHPSEYSTETEDNKKKEQNSENAEVSQSGTNMAKYLRGANPYLTNTSSDTFSLDSENVNSKSSTDTTRVAPDLLKSSLQPQLRSDLKQSAVPSSTSSSIYSIETSPNIDSSTGKTASNTKTNSHGPPTSISKQKYDQSSSHQIPVMSPKRLDDKRKITNRSCLRTLRGSSNEATLSHNIVYPASDSSSSPPYHSKKPSNPPSSGNLASHEASKCFPKAPQASTTSRRLPDHVPLYIDKNNSALYPKEPPARKSSFEKERPAKDNLGFRSMSLREPLITKNATATAAENLDVEEKKEKGGHVSRKSWTFGLPSPLKRRTSHSTHTTNETEIVNPMTNFKNKTNENDMPILANKKSCNNDDSSPYTASSMNTNDVSEAGTEGHRFSLFGNKSQLSNRNISGGTATLESSNPDLPTALPLSVPVTIIDKNGEIHKLHNDDAAIKDKSHDRHGHSKFGRKLKKIFGRK.

Residues 76 to 95 (KRTSSLPNQGHKNTSNNSAG) show a composition bias toward polar residues. 2 disordered regions span residues 76 to 142 (KRTS…GNSG) and 171 to 225 (RYSL…NDYH). The span at 101-113 (AHEDAETTFREFG) shows a compositional bias: basic and acidic residues. Polar residues predominate over residues 115 to 142 (KQSSKVLNISSSTGQNSKSRTTSLGNSG). Ser137 is modified (phosphoserine). Residues 208–225 (GSQEKKSESGGKSKNDYH) are compositionally biased toward basic and acidic residues. A Phosphoserine modification is found at Ser280. The tract at residues 404–429 (PTLSEPKPAYVPPEDVEKEPSTLSNQ) is disordered. Ser504 and Ser507 each carry phosphoserine. Disordered stretches follow at residues 510-938 (GGNQ…FRSM) and 961-993 (EKKE…THTT). A Glycyl lysine isopeptide (Lys-Gly) (interchain with G-Cter in ubiquitin) cross-link involves residue Lys526. 2 stretches are compositionally biased toward acidic residues: residues 550–561 (DQEEALSDNEPE) and 595–644 (KDDD…DDEY). The residue at position 556 (Ser556) is a Phosphoserine. Polar residues-rich tracts occupy residues 688-699 (SENAEVSQSGTN) and 710-735 (YLTN…TDTT). Lys743 is covalently cross-linked (Glycyl lysine isopeptide (Lys-Gly) (interchain with G-Cter in ubiquitin)). A compositionally biased stretch (low complexity) spans 761-773 (SSTSSSIYSIETS). 2 stretches are compositionally biased toward polar residues: residues 774 to 810 (PNID…SSHQ) and 827 to 845 (NRSC…TLSH). The segment covering 850–860 (PASDSSSSPPY) has biased composition (low complexity). Positions 916–930 (PPARKSSFEKERPAK) are enriched in basic and acidic residues. 2 positions are modified to phosphoserine: Ser980 and Ser1022.

The protein belongs to the SEG1 family. As to quaternary structure, component of eisosomes, large cytoplasmic protein assemblies that localize to specialized domains termed MCCs on the plasma membrane.

The protein localises to the cell membrane. Functionally, likely plays only a minor role in eisosome assembly. The chain is Eisosome protein SEG2 (SEG2) from Saccharomyces cerevisiae (strain ATCC 204508 / S288c) (Baker's yeast).